The following is a 95-amino-acid chain: IgNAR transmembrane form NE (95 aa).

Residues 1–36 enclose the Ig-like domain; that stretch reads LTFSTRSLLNLPAVEWKSGAKYTCTASHSPSQSTVK. Over residues 24–35 the composition is skewed to polar residues; sequence CTASHSPSQSTV. The tract at residues 24-79 is disordered; the sequence is CTASHSPSQSTVKRVIRNPKESPKGSSETRKSPLEIMESPEDYGTEEDQLENVNED. Positions 41–56 are enriched in basic and acidic residues; it reads NPKESPKGSSETRKSP. Residues 61–77 show a composition bias toward acidic residues; that stretch reads ESPEDYGTEEDQLENVN. Residue N81 is glycosylated (N-linked (GlcNAc...) asparagine).

In terms of tissue distribution, expressed mainly in lymphoid tissues including spleen, epigonal organ and circulating lymphocytes. Also expressed at low levels in the pancreas.

The protein is IgNAR transmembrane form NE of Ginglymostoma cirratum (Nurse shark).